The sequence spans 430 residues: MKTELSQKLFEKANDLFPGGVNSPVRAFKGVGGTPRFISRAKGSHIFDVDGNDYVDYVLSWGPMIVGHCHPEVMREVQDAMKEGSSFGAPSPREILLAELVRERMPWVEKMRFVSSGTEATTSAIRVARGFTGRDDIVKFDGCYHGAGDPLLVKAGSGVETLGLPDSPGVPADVARHTLTAPYNDLPALEKVFEAKGASIAAVILEPVVGNMGVLVPRPGFLQGVHDLCRKHGALYIVDEVMTGFRLSSGGACGLYGLRPDLVTFGKVIGAGLPVGAFGGRRDVMDRVAPAGPIYQAGTLSGNPMAMAAGHAALKLMTEAAYRKLEALSAALAEGLQAAAAEANVPVQVNRVGSMLTVFFSDRPVFDAASARACNTRRFGAFFHAMLEHGAYLPPSQFEAAFLSTAHTDDDVARTVAAARLAFAEAAKVA.

K267 is subject to N6-(pyridoxal phosphate)lysine.

Belongs to the class-III pyridoxal-phosphate-dependent aminotransferase family. HemL subfamily. Homodimer. Pyridoxal 5'-phosphate is required as a cofactor.

Its subcellular location is the cytoplasm. It catalyses the reaction (S)-4-amino-5-oxopentanoate = 5-aminolevulinate. Its pathway is porphyrin-containing compound metabolism; protoporphyrin-IX biosynthesis; 5-aminolevulinate from L-glutamyl-tRNA(Glu): step 2/2. In Anaeromyxobacter dehalogenans (strain 2CP-1 / ATCC BAA-258), this protein is Glutamate-1-semialdehyde 2,1-aminomutase.